A 502-amino-acid chain; its full sequence is Cytochrome P450 71B10 (502 aa).

The helical transmembrane segment at 1 to 21 threads the bilayer; the sequence is MTVLWFVSLILLISILLVAVK. A heme-binding site is contributed by C443.

The protein belongs to the cytochrome P450 family. Requires heme as cofactor.

The protein localises to the membrane. The polypeptide is Cytochrome P450 71B10 (CYP71B10) (Arabidopsis thaliana (Mouse-ear cress)).